We begin with the raw amino-acid sequence, 523 residues long: Lysine--tRNA ligase (523 aa).

A 'HIGH' region motif is present at residues 30-38; the sequence is PSGYVHVGN. D95, C99, H100, H106, C177, H180, C199, and H203 together coordinate Zn(2+). Positions 279–283 match the 'KMSKS' region motif; sequence KMSGS.

It belongs to the class-I aminoacyl-tRNA synthetase family. Requires Zn(2+) as cofactor.

The protein localises to the cytoplasm. The catalysed reaction is tRNA(Lys) + L-lysine + ATP = L-lysyl-tRNA(Lys) + AMP + diphosphate. This Pyrococcus horikoshii (strain ATCC 700860 / DSM 12428 / JCM 9974 / NBRC 100139 / OT-3) protein is Lysine--tRNA ligase (lysS).